We begin with the raw amino-acid sequence, 226 residues long: Large ribosomal subunit protein mL67 (226 aa).

The protein belongs to the mitochondrion-specific ribosomal protein mL67 family. As to quaternary structure, component of the mitochondrial large ribosomal subunit (mt-LSU). Mature yeast 74S mitochondrial ribosomes consist of a small (37S) and a large (54S) subunit. The 37S small subunit contains a 15S ribosomal RNA (15S mt-rRNA) and 34 different proteins. The 54S large subunit contains a 21S rRNA (21S mt-rRNA) and 46 different proteins.

The protein localises to the nucleus. It localises to the mitochondrion. Its function is as follows. Component of the mitochondrial ribosome (mitoribosome), a dedicated translation machinery responsible for the synthesis of mitochondrial genome-encoded proteins, including at least some of the essential transmembrane subunits of the mitochondrial respiratory chain. The mitoribosomes are attached to the mitochondrial inner membrane and translation products are cotranslationally integrated into the membrane. mL67/MHR1 also has extraribosomal functions, being involved in regulation of mitochondrial DNA recombination, maintenance and repair, and generation of homoplasmic cells. mL67/MHR1 also acts as transcription factor involved in regulation of RNA polymerase II-dependent transcription. The protein is Large ribosomal subunit protein mL67 (MHR1) of Saccharomyces cerevisiae (strain ATCC 204508 / S288c) (Baker's yeast).